Here is a 385-residue protein sequence, read N- to C-terminus: Suppressor protein STP22 of temperature-sensitive alpha-factor receptor and arginine permease (385 aa).

One can recognise a UEV domain in the interval 12-161 (AVVNWLFKVI…LHEPPQDQAP (150 aa)). Residues 155–219 (PPQDQAPSLP…DMDNTDISPT (65 aa)) are disordered. A compositionally biased stretch (polar residues) spans 168–177 (NTQLQQEQNT). A compositionally biased stretch (pro residues) spans 178–201 (PPLPPKPKSPHLKPPLPPPPPPQP). Residues 272–300 (LRAVEQAIEQTMHSLNAQIDVLTANRAKV) are a coiled coil. An SB domain is found at 322–385 (TDGLNQLYNL…HIQRITSPLS (64 aa)).

The protein belongs to the ubiquitin-conjugating enzyme family. UEV subfamily. Component of the ESCRT-I complex (endosomal sorting complex required for transport I) which consists of STP22, VPS28, SRN2 and MVB12 in a 1:1:1:1 stoichiometry. Interacts with HSE1 and VPS27. Interacts with MVB12 and SRN2.

It localises to the cytoplasm. The protein localises to the endosome. It is found in the late endosome membrane. In terms of biological role, component of the ESCRT-I complex, a regulator of vesicular trafficking process. Binds to ubiquitinated cargo proteins and is required for the sorting of endocytic ubiquitinated cargos into multivesicular bodies (MVBs). Mediates the association to the ESCRT-0 complex. Required for vacuolar targeting of temperature-sensitive plasma membrane proteins STE2 and CAN1. The sequence is that of Suppressor protein STP22 of temperature-sensitive alpha-factor receptor and arginine permease (STP22) from Saccharomyces cerevisiae (strain ATCC 204508 / S288c) (Baker's yeast).